The following is an 830-amino-acid chain: Penicillin-binding protein 1A (830 aa).

The span at 1 to 17 (MTERKREHKDRKQKKNS) shows a compositional bias: basic residues. Residues 1–20 (MTERKREHKDRKQKKNSPKN) form a disordered region. Topologically, residues 1-30 (MTERKREHKDRKQKKNSPKNQSKVTKFLKW) are cytoplasmic. A helical; Signal-anchor for type II membrane protein membrane pass occupies residues 31–51 (FFIGILLLGITAVTVVGIYVL). At 52–830 (SIIRSSPELD…QNGQNNNITQ (779 aa)) the chain is on the extracellular side. The transglycosylase stretch occupies residues 72–244 (SILYDDQGNF…PTSYDGLSEA (173 aa)). The active-site Proton donor; for transglycosylase activity is E111. A transpeptidase region spans residues 378–663 (ASATIIDYKT…TSPIFGKIMG (286 aa)). The active-site Acyl-ester intermediate; for transpeptidase activity is the S417. Positions 731–830 (APDTNDNNNS…QNGQNNNITQ (100 aa)) are disordered. A compositionally biased stretch (low complexity) spans 735–746 (NDNNNSGANEGN). The segment covering 747-758 (KQQETKPEEVKP) has biased composition (basic and acidic residues). Low complexity-rich tracts occupy residues 759–807 (NENN…NTNN) and 816–830 (GNNQ…NITQ).

It in the N-terminal section; belongs to the glycosyltransferase 51 family. In the C-terminal section; belongs to the transpeptidase family.

The protein resides in the cell membrane. It catalyses the reaction [GlcNAc-(1-&gt;4)-Mur2Ac(oyl-L-Ala-gamma-D-Glu-L-Lys-D-Ala-D-Ala)](n)-di-trans,octa-cis-undecaprenyl diphosphate + beta-D-GlcNAc-(1-&gt;4)-Mur2Ac(oyl-L-Ala-gamma-D-Glu-L-Lys-D-Ala-D-Ala)-di-trans,octa-cis-undecaprenyl diphosphate = [GlcNAc-(1-&gt;4)-Mur2Ac(oyl-L-Ala-gamma-D-Glu-L-Lys-D-Ala-D-Ala)](n+1)-di-trans,octa-cis-undecaprenyl diphosphate + di-trans,octa-cis-undecaprenyl diphosphate + H(+). The enzyme catalyses Preferential cleavage: (Ac)2-L-Lys-D-Ala-|-D-Ala. Also transpeptidation of peptidyl-alanyl moieties that are N-acyl substituents of D-alanine.. The protein operates within cell wall biogenesis; peptidoglycan biosynthesis. Its function is as follows. Cell wall formation. Synthesis of cross-linked peptidoglycan from the lipid intermediates. The enzyme has a penicillin-insensitive transglycosylase N-terminal domain (formation of linear glycan strands) and a penicillin-sensitive transpeptidase C-terminal domain (cross-linking of the peptide subunits). In Clostridium perfringens (strain ATCC 13124 / DSM 756 / JCM 1290 / NCIMB 6125 / NCTC 8237 / Type A), this protein is Penicillin-binding protein 1A (pbpA).